The primary structure comprises 215 residues: Thiamine-phosphate synthase (215 aa).

Residues 43–47 and Asn-75 each bind 4-amino-2-methyl-5-(diphosphooxymethyl)pyrimidine; that span reads QLRDK. Mg(2+) contacts are provided by Asp-76 and Asp-95. Ser-114 provides a ligand contact to 4-amino-2-methyl-5-(diphosphooxymethyl)pyrimidine. 141–143 lines the 2-[(2R,5Z)-2-carboxy-4-methylthiazol-5(2H)-ylidene]ethyl phosphate pocket; sequence TPT. Position 144 (Lys-144) interacts with 4-amino-2-methyl-5-(diphosphooxymethyl)pyrimidine. Residue Gly-172 participates in 2-[(2R,5Z)-2-carboxy-4-methylthiazol-5(2H)-ylidene]ethyl phosphate binding.

This sequence belongs to the thiamine-phosphate synthase family. It depends on Mg(2+) as a cofactor.

The enzyme catalyses 2-[(2R,5Z)-2-carboxy-4-methylthiazol-5(2H)-ylidene]ethyl phosphate + 4-amino-2-methyl-5-(diphosphooxymethyl)pyrimidine + 2 H(+) = thiamine phosphate + CO2 + diphosphate. The catalysed reaction is 2-(2-carboxy-4-methylthiazol-5-yl)ethyl phosphate + 4-amino-2-methyl-5-(diphosphooxymethyl)pyrimidine + 2 H(+) = thiamine phosphate + CO2 + diphosphate. It catalyses the reaction 4-methyl-5-(2-phosphooxyethyl)-thiazole + 4-amino-2-methyl-5-(diphosphooxymethyl)pyrimidine + H(+) = thiamine phosphate + diphosphate. Its pathway is cofactor biosynthesis; thiamine diphosphate biosynthesis; thiamine phosphate from 4-amino-2-methyl-5-diphosphomethylpyrimidine and 4-methyl-5-(2-phosphoethyl)-thiazole: step 1/1. Its function is as follows. Condenses 4-methyl-5-(beta-hydroxyethyl)thiazole monophosphate (THZ-P) and 2-methyl-4-amino-5-hydroxymethyl pyrimidine pyrophosphate (HMP-PP) to form thiamine monophosphate (TMP). The sequence is that of Thiamine-phosphate synthase from Streptomyces avermitilis (strain ATCC 31267 / DSM 46492 / JCM 5070 / NBRC 14893 / NCIMB 12804 / NRRL 8165 / MA-4680).